We begin with the raw amino-acid sequence, 467 residues long: Matrix metalloproteinase-18 (467 aa).

An N-terminal signal peptide occupies residues 1-17 (MNSLLLKLLLCVAITAA). The propeptide occupies 18–99 (FPADKQDEPP…PRCGVYDVGQ (82 aa)). The Cysteine switch motif lies at 90 to 97 (PRCGVYDV). Cys92 and His218 together coordinate Zn(2+). Glu219 is an active-site residue. 2 residues coordinate Zn(2+): His222 and His228. Hemopexin repeat units follow at residues 277–326 (PSRC…WPSL), 327–373 (PTNI…GFPK), 375–423 (VKRI…FPGI), and 424–467 (PDKI…WLGC). A disulfide bond links Cys280 and Cys467.

The protein belongs to the peptidase M10A family. The cofactor is Zn(2+). Ca(2+) serves as cofactor. As to expression, expressed only transiently in whole animal, at time when tadpole feeding begins.

The protein resides in the secreted. It is found in the extracellular space. Its subcellular location is the extracellular matrix. With respect to regulation, up-regulated in the tail by thyroid hormone. Functionally, cleaves collagen type I. May play a role in larval tissue degeneration and adult organogenesis during amphibian metamorphosis. May be involved in tail resorption. This Xenopus laevis (African clawed frog) protein is Matrix metalloproteinase-18 (mmp18).